Reading from the N-terminus, the 136-residue chain is Small ribosomal subunit protein uS11 (136 aa).

It belongs to the universal ribosomal protein uS11 family. As to quaternary structure, part of the 30S ribosomal subunit. Interacts with proteins S7 and S18. Binds to IF-3.

In terms of biological role, located on the platform of the 30S subunit, it bridges several disparate RNA helices of the 16S rRNA. Forms part of the Shine-Dalgarno cleft in the 70S ribosome. The polypeptide is Small ribosomal subunit protein uS11 (Leptospira borgpetersenii serovar Hardjo-bovis (strain JB197)).